The sequence spans 405 residues: Enoyl-[acyl-carrier-protein] reductase [NADH] (405 aa).

Residues 51–56 (GASSGY), 77–78 (FE), 114–115 (DA), and 142–143 (LA) contribute to the NAD(+) site. Residue Tyr-228 participates in substrate binding. Tyr-238 (proton donor) is an active-site residue. Residues Lys-247 and 276–278 (VVT) contribute to the NAD(+) site.

The protein belongs to the TER reductase family. In terms of assembly, monomer.

It carries out the reaction a 2,3-saturated acyl-[ACP] + NAD(+) = a (2E)-enoyl-[ACP] + NADH + H(+). It functions in the pathway lipid metabolism; fatty acid biosynthesis. In terms of biological role, involved in the final reduction of the elongation cycle of fatty acid synthesis (FAS II). Catalyzes the reduction of a carbon-carbon double bond in an enoyl moiety that is covalently linked to an acyl carrier protein (ACP). The sequence is that of Enoyl-[acyl-carrier-protein] reductase [NADH] from Chromohalobacter salexigens (strain ATCC BAA-138 / DSM 3043 / CIP 106854 / NCIMB 13768 / 1H11).